Here is a 284-residue protein sequence, read N- to C-terminus: NAD kinase (284 aa).

Catalysis depends on D70, which acts as the Proton acceptor. NAD(+) is bound by residues 70 to 71, 139 to 140, K167, D169, L177, 180 to 185, and Q236; these read DG, NE, and TAYNLS.

The protein belongs to the NAD kinase family. A divalent metal cation is required as a cofactor.

Its subcellular location is the cytoplasm. It carries out the reaction NAD(+) + ATP = ADP + NADP(+) + H(+). Its function is as follows. Involved in the regulation of the intracellular balance of NAD and NADP, and is a key enzyme in the biosynthesis of NADP. Catalyzes specifically the phosphorylation on 2'-hydroxyl of the adenosine moiety of NAD to yield NADP. The polypeptide is NAD kinase (Helicobacter pylori (strain Shi470)).